Reading from the N-terminus, the 390-residue chain is Flap endonuclease 1-2 (390 aa).

The N-domain stretch occupies residues 1–108 (MGIHQLMQFL…GELARRKKLK (108 aa)). Asp-34 contacts Mg(2+). Residue Arg-74 coordinates DNA. Positions 90, 162, 164, 183, and 185 each coordinate Mg(2+). The tract at residues 126 to 254 (QALLQNQRTT…GTAYKLIKEY (129 aa)) is I-domain. Glu-162 is a binding site for DNA. DNA-binding residues include Gly-232 and Asp-234. Asp-234 lines the Mg(2+) pocket. The segment at 348 to 356 (FQSRLENFF) is interaction with PCNA. The disordered stretch occupies residues 359 to 390 (TTKIIHPNNSKAKAKSNKKTEQPQKSGGKKKI).

Belongs to the XPG/RAD2 endonuclease family. FEN1 subfamily. In terms of assembly, interacts with PCNA. Three molecules of FEN1 bind to one PCNA trimer with each molecule binding to one PCNA monomer. PCNA stimulates the nuclease activity without altering cleavage specificity. Mg(2+) serves as cofactor. Post-translationally, phosphorylated. Phosphorylation upon DNA damage induces relocalization to the nuclear plasma.

The protein resides in the nucleus. It localises to the nucleolus. It is found in the nucleoplasm. The protein localises to the mitochondrion. Functionally, structure-specific nuclease with 5'-flap endonuclease and 5'-3' exonuclease activities involved in DNA replication and repair. During DNA replication, cleaves the 5'-overhanging flap structure that is generated by displacement synthesis when DNA polymerase encounters the 5'-end of a downstream Okazaki fragment. It enters the flap from the 5'-end and then tracks to cleave the flap base, leaving a nick for ligation. Also involved in the long patch base excision repair (LP-BER) pathway, by cleaving within the apurinic/apyrimidinic (AP) site-terminated flap. Acts as a genome stabilization factor that prevents flaps from equilibrating into structures that lead to duplications and deletions. Also possesses 5'-3' exonuclease activity on nicked or gapped double-stranded DNA, and exhibits RNase H activity. Also involved in replication and repair of rDNA and in repairing mitochondrial DNA. The chain is Flap endonuclease 1-2 from Paramecium tetraurelia.